A 240-amino-acid chain; its full sequence is Putative cytochrome c-type biogenesis protein DbsD-like (240 aa).

The next 6 helical transmembrane spans lie at 32–52 (FVFF…ILPI), 74–94 (FFFC…ATLL), 104–124 (GIPV…LNIV), 149–169 (VGIG…LLIW), 176–196 (LFIG…PIII), and 218–238 (APFS…SSIL).

It belongs to the DsbD family.

The protein resides in the plastid. It localises to the chloroplast membrane. Could be involved in cytochrome c synthesis. The protein is Putative cytochrome c-type biogenesis protein DbsD-like of Porphyra purpurea (Red seaweed).